Reading from the N-terminus, the 171-residue chain is Small ribosomal subunit protein uS5 (171 aa).

Residues 14 to 77 enclose the S5 DRBM domain; the sequence is YIEKLVNIRR…DKARKAMKNV (64 aa).

Belongs to the universal ribosomal protein uS5 family. As to quaternary structure, part of the 30S ribosomal subunit. Contacts proteins S4 and S8.

With S4 and S12 plays an important role in translational accuracy. Its function is as follows. Located at the back of the 30S subunit body where it stabilizes the conformation of the head with respect to the body. This chain is Small ribosomal subunit protein uS5, found in Vesicomyosocius okutanii subsp. Calyptogena okutanii (strain HA).